The following is a 71-amino-acid chain: MARITIEDCLKRIPNRFQLTLAATYRARQITIGSTPQVELEKSDKDKPTVIALREIAAGKVGLEVLNRGQA.

The protein belongs to the RNA polymerase subunit omega family. The RNAP catalytic core consists of 2 alpha, 1 beta, 1 beta' and 1 omega subunit. When a sigma factor is associated with the core the holoenzyme is formed, which can initiate transcription.

The enzyme catalyses RNA(n) + a ribonucleoside 5'-triphosphate = RNA(n+1) + diphosphate. In terms of biological role, promotes RNA polymerase assembly. Latches the N- and C-terminal regions of the beta' subunit thereby facilitating its interaction with the beta and alpha subunits. The chain is DNA-directed RNA polymerase subunit omega from Aromatoleum aromaticum (strain DSM 19018 / LMG 30748 / EbN1) (Azoarcus sp. (strain EbN1)).